The chain runs to 313 residues: Chemotaxis protein CheV2 (313 aa).

The CheW-like domain maps to 16 to 172 (EAQFLCFRLD…VEKMISDVFP (157 aa)). Positions 193–313 (LILIAEDSLS…IHEMLKKTLS (121 aa)) constitute a Response regulatory domain. Aspartate 246 is subject to 4-aspartylphosphate.

Post-translationally, phosphorylated; probably by transfer of CheAY phosphate group.

Plays a role in chemotaxis signal transduction system in order to colonize the host stomach. May act as a phosphate sink to control the flow of phosphate to CheAY. This is Chemotaxis protein CheV2 from Helicobacter pylori (strain ATCC 700392 / 26695) (Campylobacter pylori).